Reading from the N-terminus, the 138-residue chain is Cysteine desulfuration protein SufE (138 aa).

The Cysteine persulfide intermediate role is filled by Cys-51.

The protein belongs to the SufE family. As to quaternary structure, homodimer. Interacts with SufS.

The protein resides in the cytoplasm. It participates in cofactor biosynthesis; iron-sulfur cluster biosynthesis. In terms of biological role, participates in cysteine desulfuration mediated by SufS. Cysteine desulfuration mobilizes sulfur from L-cysteine to yield L-alanine and constitutes an essential step in sulfur metabolism for biosynthesis of a variety of sulfur-containing biomolecules. Functions as a sulfur acceptor for SufS, by mediating the direct transfer of the sulfur atom from the S-sulfanylcysteine of SufS, an intermediate product of cysteine desulfuration process. In Shigella flexneri serotype 5b (strain 8401), this protein is Cysteine desulfuration protein SufE.